The chain runs to 210 residues: Large ribosomal subunit protein uL3 (210 aa).

This sequence belongs to the universal ribosomal protein uL3 family. In terms of assembly, part of the 50S ribosomal subunit. Forms a cluster with proteins L14 and L19.

Its function is as follows. One of the primary rRNA binding proteins, it binds directly near the 3'-end of the 23S rRNA, where it nucleates assembly of the 50S subunit. The chain is Large ribosomal subunit protein uL3 from Pseudothermotoga lettingae (strain ATCC BAA-301 / DSM 14385 / NBRC 107922 / TMO) (Thermotoga lettingae).